The following is a 131-amino-acid chain: Profilin-1 (131 aa).

The protein belongs to the profilin family. In terms of assembly, occurs in many kinds of cells as a complex with monomeric actin in a 1:1 ratio. Cytoplasmic distribution in hypocotyls. In root nodules, it is found in all cells, but is more abundant in the vascular tissue as well as the endodermis.

It localises to the cytoplasm. The protein localises to the cytoskeleton. Binds to actin and affects the structure of the cytoskeleton. At high concentrations, profilin prevents the polymerization of actin, whereas it enhances it at low concentrations. By binding to PIP2, it inhibits the formation of IP3 and DG. The protein is Profilin-1 of Phaseolus vulgaris (Kidney bean).